A 379-amino-acid chain; its full sequence is MANLRKTHPLLKIANDALVDLPTPSNISAWWNFGSLLGLCLISQILTGLFLAMHYTSDISTAFSSVAHICRDVNYGWLIRNLHANGASFFFICLYLHIARGLYYGSYLYKETWNIGVVLFLLVMMTAFVGYVLPWGQMSFWGATVITNLLSAVPYVGNSLVQWIWGGFSVDNATLTRFFAFHFLFPFVVAGATMIHLLFLHETGSSNPVGLNSDADKVPFHPYFSYKDLLGFIIMLTALTMLALFYPNLLGDPDNFTPANPMVTPPHIKPEWYFLFAYAILRSIPNKLGGVLALLSSILVLMVVPILHTSKQRGLTFRPASQLLFWILVADMLVLTWIGGMPVEHPYIIIGQVASVLYFSLFLVLNPLVGWLENKVMNW.

Transmembrane regions (helical) follow at residues 33–53, 77–98, 113–133, and 178–198; these read FGSL…FLAM, WLIR…YLHI, WNIG…GYVL, and FFAF…IHLL. His-83 and His-97 together coordinate heme b. The heme b site is built by His-182 and His-196. His-201 contacts a ubiquinone. The next 4 membrane-spanning stretches (helical) occupy residues 226-246, 288-308, 320-340, and 347-367; these read YKDL…ALFY, LGGV…PILH, ASQL…WIGG, and YIII…VLNP.

Belongs to the cytochrome b family. The cytochrome bc1 complex contains 3 respiratory subunits (MT-CYB, CYC1 and UQCRFS1), 2 core proteins (UQCRC1 and UQCRC2) and probably 6 low-molecular weight proteins. Heme b is required as a cofactor.

The protein resides in the mitochondrion inner membrane. Its function is as follows. Component of the ubiquinol-cytochrome c reductase complex (complex III or cytochrome b-c1 complex) that is part of the mitochondrial respiratory chain. The b-c1 complex mediates electron transfer from ubiquinol to cytochrome c. Contributes to the generation of a proton gradient across the mitochondrial membrane that is then used for ATP synthesis. This is Cytochrome b (mt-cyb) from Anguilla dieffenbachii (New Zealand longfin eel).